Consider the following 347-residue polypeptide: Probable nitronate monooxygenase (347 aa).

FMN is bound by residues asparagine 69, glutamine 171, glycine 176, glycine 213, and 232 to 235 (QIGS).

It belongs to the nitronate monooxygenase family. NMO class I subfamily. It depends on FMN as a cofactor.

The catalysed reaction is 3 propionate 3-nitronate + 3 O2 + H2O = 3 3-oxopropanoate + 2 nitrate + nitrite + H2O2 + 3 H(+). In terms of biological role, nitronate monooxygenase that uses molecular oxygen to catalyze the oxidative denitrification of alkyl nitronates. Acts on propionate 3-nitronate (P3N), the presumed physiological substrate. Probably functions in the detoxification of P3N, a metabolic poison produced by plants and fungi as a defense mechanism. In Bacillus subtilis (strain 168), this protein is Probable nitronate monooxygenase (yrpB).